We begin with the raw amino-acid sequence, 690 residues long: Kelch-like protein 8 (690 aa).

The 68-residue stretch at 111–178 folds into the BTB domain; sequence CDVELLVAGS…IYTDKIAITM (68 aa). Positions 213 to 314 constitute a BACK domain; the sequence is CMSLYHFSDI…VGWNFLCEAV (102 aa). Kelch repeat units lie at residues 383–430, 431–477, 478–524, 525–571, 572–618, and 620–665; these read AIFC…SANG, NLYA…SIEN, VIYA…VIGR, YLFA…VLDG, YLYA…ALGG, and VYAI…WANV.

In terms of assembly, component of the BCR(kel-8) E3 ubiquitin ligase complex, at least composed of cul-3, kel-8 and rbx-1. Interacts with rpy-1. Expressed in neurons.

Its subcellular location is the synapse. The protein operates within protein modification; protein ubiquitination. In terms of biological role, substrate-specific adapter of a BCR (BTB-CUL3-RBX1) E3 ubiquitin ligase complex that regulates degradation of glutamate receptors in neurons. The BCR(kel-8) ubiquitin ligase complex mediates ubiquitination and subsequent degradation of rpy-1. Indirectly regulates the protein turnover of glr-1, possibly via ubiquitination and degradation of rpy-1. The sequence is that of Kelch-like protein 8 (kel-8) from Caenorhabditis elegans.